The following is a 153-amino-acid chain: Putative pre-16S rRNA nuclease (153 aa).

Belongs to the YqgF nuclease family.

It is found in the cytoplasm. Functionally, could be a nuclease involved in processing of the 5'-end of pre-16S rRNA. The sequence is that of Putative pre-16S rRNA nuclease from Prochlorococcus marinus (strain MIT 9215).